Reading from the N-terminus, the 551-residue chain is Rqc2 homolog RqcH (551 aa).

It belongs to the NEMF family. Associates with stalled 50S ribosomal subunits, binds to RqcP. Interacts with human fibronectin.

Its subcellular location is the secreted. It localises to the capsule. It is found in the cell surface. The protein localises to the cytoplasm. In terms of biological role, key component of the ribosome quality control system (RQC), a ribosome-associated complex that mediates the extraction of incompletely synthesized nascent chains from stalled ribosomes and their subsequent degradation. RqcH recruits Ala-charged tRNA, and with RqcP directs the elongation of stalled nascent chains on 50S ribosomal subunits, leading to non-templated C-terminal alanine extensions (Ala tail). The Ala tail promotes nascent chain degradation. May add between 1 and at least 8 Ala residues. Binds to stalled 50S ribosomal subunits. Functionally, plays a significant role in virulence. Recombinant protein binds to immobilized human fibronectin; binding is saturable and competed by heparin. Purified protein inhibits binding of whole cells to fibronectin. The polypeptide is Rqc2 homolog RqcH (Streptococcus pneumoniae serotype 2 (strain D39 / NCTC 7466)).